The following is a 502-amino-acid chain: ATP synthase subunit alpha (502 aa).

169–176 (GDRQTGKT) is an ATP binding site.

The protein belongs to the ATPase alpha/beta chains family. As to quaternary structure, F-type ATPases have 2 components, CF(1) - the catalytic core - and CF(0) - the membrane proton channel. CF(1) has five subunits: alpha(3), beta(3), gamma(1), delta(1), epsilon(1). CF(0) has three main subunits: a(1), b(2) and c(9-12). The alpha and beta chains form an alternating ring which encloses part of the gamma chain. CF(1) is attached to CF(0) by a central stalk formed by the gamma and epsilon chains, while a peripheral stalk is formed by the delta and b chains.

It localises to the cell membrane. The catalysed reaction is ATP + H2O + 4 H(+)(in) = ADP + phosphate + 5 H(+)(out). Produces ATP from ADP in the presence of a proton gradient across the membrane. The alpha chain is a regulatory subunit. In Clostridium perfringens (strain ATCC 13124 / DSM 756 / JCM 1290 / NCIMB 6125 / NCTC 8237 / Type A), this protein is ATP synthase subunit alpha.